Consider the following 177-residue polypeptide: Inner membrane-spanning protein YciB (177 aa).

5 helical membrane passes run 22–42 (IFIASKSLIFISGLTCLLYWI), 50–70 (INLFSFITIAIFGSLTIIFHN), 76–96 (WKITIIYMIFSVILFISQFFM), 121–141 (FFWALFFLFCSILNIYVALCL), and 151–171 (VFGLSFLMFLSILITSIYINF).

It belongs to the YciB family.

It is found in the cell inner membrane. Plays a role in cell envelope biogenesis, maintenance of cell envelope integrity and membrane homeostasis. This is Inner membrane-spanning protein YciB from Buchnera aphidicola subsp. Schizaphis graminum (strain Sg).